We begin with the raw amino-acid sequence, 1658 residues long: Protein TIC 214 (1658 aa).

6 helical membrane-spanning segments follow: residues 28–48 (FGLY…ILTI), 52–72 (LLGG…GQLI), 82–102 (IYVM…YMLF), 130–150 (IFLD…SPVF), 165–185 (ISFV…FINL), and 199–219 (VNYP…ILAL).

It belongs to the TIC214 family. As to quaternary structure, part of the Tic complex.

The protein resides in the plastid. Its subcellular location is the chloroplast inner membrane. Involved in protein precursor import into chloroplasts. May be part of an intermediate translocation complex acting as a protein-conducting channel at the inner envelope. The polypeptide is Protein TIC 214 (Huperzia lucidula (Shining clubmoss)).